Reading from the N-terminus, the 270-residue chain is Decarboxylase NovR (270 aa).

This sequence belongs to the aldolase class II family.

Its pathway is antibiotic biosynthesis; novobiocin biosynthesis. Functionally, may mediate the 2 consecutive oxidative decarboxylation steps in the biosynthesis of the prenylated hydroxybenzoic acid moiety of novobiocin, an aminocoumarin family antibiotic that targets bacterial DNA gyrases. This is Decarboxylase NovR (novR) from Streptomyces niveus (Streptomyces spheroides).